We begin with the raw amino-acid sequence, 418 residues long: UDP-N-acetylglucosamine 1-carboxyvinyltransferase (418 aa).

Residue Lys22–Asn23 participates in phosphoenolpyruvate binding. UDP-N-acetyl-alpha-D-glucosamine is bound at residue Arg92. Cys116 (proton donor) is an active-site residue. Cys116 is subject to 2-(S-cysteinyl)pyruvic acid O-phosphothioketal. Residues Arg121–Leu125, Asp305, and Leu327 each bind UDP-N-acetyl-alpha-D-glucosamine.

The protein belongs to the EPSP synthase family. MurA subfamily.

It localises to the cytoplasm. The enzyme catalyses phosphoenolpyruvate + UDP-N-acetyl-alpha-D-glucosamine = UDP-N-acetyl-3-O-(1-carboxyvinyl)-alpha-D-glucosamine + phosphate. It functions in the pathway cell wall biogenesis; peptidoglycan biosynthesis. Cell wall formation. Adds enolpyruvyl to UDP-N-acetylglucosamine. The chain is UDP-N-acetylglucosamine 1-carboxyvinyltransferase from Campylobacter lari (strain RM2100 / D67 / ATCC BAA-1060).